Here is a 190-residue protein sequence, read N- to C-terminus: Cytoglobin (190 aa).

Residues 1-21 form a disordered region; that stretch reads MEKVPGDMEIERRERSEELSE. Positions 18–167 constitute a Globin domain; it reads ELSEAERKAV…IYSHVTAAYK (150 aa). The cysteines at positions 38 and 83 are disulfide-linked. Residues His81 and His113 each coordinate heme b.

This sequence belongs to the globin family. In terms of assembly, monomeric. Homodimer; disulfide-linked in vitro. Also homooligomeric in vitro. The formation of an intramolecular disulfide bond between cysteines Cys-38 and Cys-83 specifically enhances the nitrite reductase activity. In terms of tissue distribution, expressed in brain and retina by non-neuronal cells (at protein level). This is the major globin expressed in vascular smooth muscle and is not present in the endothelium (at protein level).

It localises to the cytoplasm. Its subcellular location is the nucleus. The enzyme catalyses Fe(II)-heme b-[protein] + nitric oxide + O2 = Fe(III)-heme b-[protein] + nitrate. The catalysed reaction is 2 superoxide + 2 H(+) = H2O2 + O2. It catalyses the reaction Fe(III)-heme b-[protein] + nitric oxide + H2O = Fe(II)-heme b-[protein] + nitrite + 2 H(+). It carries out the reaction H2O2 + AH2 = A + 2 H2O. Its activity is regulated as follows. The nitric oxide dioxygenase activity is activated by a reducing system composed of cytochrome b5, its upstream reductase CYB5R3 and NADH. Functionally, probable multifunctional globin with a hexacoordinated heme iron required for the catalysis of various reactions depending on redox condition of the cell as well as oxygen availability. Has a nitric oxide dioxygenase (NOD) activity and is most probably involved in cell-mediated and oxygen-dependent nitric oxide consumption. By scavenging this second messenger may regulate several biological processes including endothelium-mediated vasodilation and vascular tone. Under normoxic conditions functions as a nitric oxide dioxygenase (NOD) but under hypoxic conditions the globin may switch its function to that of a nitrite (NO2) reductase (NiR), generating nitric oxide. Could also have peroxidase and superoxide dismutase activities, detoxifying reactive oxygen species and protecting cells against oxidative stress. Also binds dioxygen with low affinity and could function as an oxygen sensor but has probably no function as a respiratory oxygen carrier. The sequence is that of Cytoglobin from Mus musculus (Mouse).